Here is a 102-residue protein sequence, read N- to C-terminus: Large ribosomal subunit protein uL24 (102 aa).

It belongs to the universal ribosomal protein uL24 family. Part of the 50S ribosomal subunit.

One of two assembly initiator proteins, it binds directly to the 5'-end of the 23S rRNA, where it nucleates assembly of the 50S subunit. In terms of biological role, one of the proteins that surrounds the polypeptide exit tunnel on the outside of the subunit. The sequence is that of Large ribosomal subunit protein uL24 from Paraburkholderia phytofirmans (strain DSM 17436 / LMG 22146 / PsJN) (Burkholderia phytofirmans).